An 88-amino-acid polypeptide reads, in one-letter code: Putative transposase InsN for insertion sequence element IS911B (88 aa).

It belongs to the transposase 8 family.

In terms of biological role, involved in the transposition of the insertion sequence IS911. In Escherichia coli (strain K12), this protein is Putative transposase InsN for insertion sequence element IS911B (insN2).